The primary structure comprises 440 residues: NADH-quinone oxidoreductase subunit D (440 aa).

It belongs to the complex I 49 kDa subunit family. NDH-1 is composed of 14 different subunits. Subunits NuoB, C, D, E, F, and G constitute the peripheral sector of the complex.

The protein resides in the cell membrane. It catalyses the reaction a quinone + NADH + 5 H(+)(in) = a quinol + NAD(+) + 4 H(+)(out). NDH-1 shuttles electrons from NADH, via FMN and iron-sulfur (Fe-S) centers, to quinones in the respiratory chain. The immediate electron acceptor for the enzyme in this species is believed to be a menaquinone. Couples the redox reaction to proton translocation (for every two electrons transferred, four hydrogen ions are translocated across the cytoplasmic membrane), and thus conserves the redox energy in a proton gradient. The chain is NADH-quinone oxidoreductase subunit D from Mycobacterium bovis (strain ATCC BAA-935 / AF2122/97).